The primary structure comprises 310 residues: Porphobilinogen deaminase (310 aa).

Cysteine 242 is subject to S-(dipyrrolylmethanemethyl)cysteine.

It belongs to the HMBS family. As to quaternary structure, monomer. Requires dipyrromethane as cofactor.

The catalysed reaction is 4 porphobilinogen + H2O = hydroxymethylbilane + 4 NH4(+). It functions in the pathway porphyrin-containing compound metabolism; protoporphyrin-IX biosynthesis; coproporphyrinogen-III from 5-aminolevulinate: step 2/4. In terms of biological role, tetrapolymerization of the monopyrrole PBG into the hydroxymethylbilane pre-uroporphyrinogen in several discrete steps. The sequence is that of Porphobilinogen deaminase from Shewanella halifaxensis (strain HAW-EB4).